The chain runs to 291 residues: Putative transport permease ycf38 (291 aa).

6 helical membrane passes run 47-67 (ATLM…GGLF), 87-107 (SGII…PLMF), 135-155 (FMTC…LFMG), 165-185 (LIFA…SLAL), 195-215 (LLAL…ALAP), and 262-282 (ISLG…AYIV). The region spanning 47–289 (ATLMAGIIQP…YIVSNILKAR (243 aa)) is the ABC transmembrane type-2 domain.

This sequence belongs to the ABC-2 integral membrane protein family.

The protein resides in the plastid. It is found in the chloroplast membrane. The sequence is that of Putative transport permease ycf38 (ycf38) from Porphyra purpurea (Red seaweed).